The chain runs to 174 residues: UPF0113 protein AF_0058 (174 aa).

A PUA domain is found at Arg-87 to Arg-161.

It belongs to the UPF0113 family.

In Archaeoglobus fulgidus (strain ATCC 49558 / DSM 4304 / JCM 9628 / NBRC 100126 / VC-16), this protein is UPF0113 protein AF_0058.